A 209-amino-acid chain; its full sequence is MSISKAIAADLLEIKAVSLSPSQPFTWASGIKSPIYTDNRVTLAYPEVRSQIEGAFAELIKAEFPEVEVIAGTATAGIPHGAIIADYLKLPFAYIRSKPKDHGAGNQVEGRVAKGQKMVVVEDLISTGGSVLEAVAAAEREGADVLGVVAIFTYELEKANSKFAESGVKLATLTNYSELIEIAKETGYVTKEELELLKKFKENQETWQA.

5-phospho-alpha-D-ribose 1-diphosphate-binding positions include Arg-96, Lys-100, His-102, and Glu-122–Ser-130. Ser-126 lines the orotate pocket.

This sequence belongs to the purine/pyrimidine phosphoribosyltransferase family. PyrE subfamily. As to quaternary structure, homodimer. Requires Mg(2+) as cofactor.

The enzyme catalyses orotidine 5'-phosphate + diphosphate = orotate + 5-phospho-alpha-D-ribose 1-diphosphate. The protein operates within pyrimidine metabolism; UMP biosynthesis via de novo pathway; UMP from orotate: step 1/2. Its function is as follows. Catalyzes the transfer of a ribosyl phosphate group from 5-phosphoribose 1-diphosphate to orotate, leading to the formation of orotidine monophosphate (OMP). This chain is Orotate phosphoribosyltransferase, found in Lactococcus lactis subsp. cremoris (strain SK11).